We begin with the raw amino-acid sequence, 186 residues long: Crossover junction endodeoxyribonuclease RuvC (186 aa).

Active-site residues include Asp14, Glu73, and Asp145. Positions 14, 73, and 145 each coordinate Mg(2+). The segment at 162 to 186 (GRSLPPSRGRRRSGSRQRWRDYRPS) is disordered. Over residues 169–178 (RGRRRSGSRQ) the composition is skewed to basic residues.

Belongs to the RuvC family. As to quaternary structure, homodimer which binds Holliday junction (HJ) DNA. The HJ becomes 2-fold symmetrical on binding to RuvC with unstacked arms; it has a different conformation from HJ DNA in complex with RuvA. In the full resolvosome a probable DNA-RuvA(4)-RuvB(12)-RuvC(2) complex forms which resolves the HJ. Requires Mg(2+) as cofactor.

It localises to the cytoplasm. The enzyme catalyses Endonucleolytic cleavage at a junction such as a reciprocal single-stranded crossover between two homologous DNA duplexes (Holliday junction).. Its function is as follows. The RuvA-RuvB-RuvC complex processes Holliday junction (HJ) DNA during genetic recombination and DNA repair. Endonuclease that resolves HJ intermediates. Cleaves cruciform DNA by making single-stranded nicks across the HJ at symmetrical positions within the homologous arms, yielding a 5'-phosphate and a 3'-hydroxyl group; requires a central core of homology in the junction. The consensus cleavage sequence is 5'-(A/T)TT(C/G)-3'. Cleavage occurs on the 3'-side of the TT dinucleotide at the point of strand exchange. HJ branch migration catalyzed by RuvA-RuvB allows RuvC to scan DNA until it finds its consensus sequence, where it cleaves and resolves the cruciform DNA. In Chromohalobacter salexigens (strain ATCC BAA-138 / DSM 3043 / CIP 106854 / NCIMB 13768 / 1H11), this protein is Crossover junction endodeoxyribonuclease RuvC.